Here is a 413-residue protein sequence, read N- to C-terminus: MENSGKANKKDTHDGPPKEIKLPTSEALLDYQCQIKEDAVEQFMFQIKTLRKKNQKYHERNSRLKEEQIWHIRHLLKELSEEKAEGLPVVTREDVEEAMKEKWKFERDQEKNLRDMRMQISNAEKLFLEKLSEKEYWEEYKNVGSERHAKLITSLQNDINTVKENAEKMSEHYKITLEDTRKKIIKETLLQLDQKKEWATQNAVKLIDKGSYLEIWENDWLKKEVAIHRKEVEELKNAIHELEAENLVLIDQLSNCRLVDLKIPRRLYLTQAAGLEVPPEEMSLELPETHIEEKSELQPTEVESRDLMSSSDESTILHLSHENSIEDLQYVKIDKEENSGTEFGDTDMKYLLYEDEKDFKDYVNLGPLGVKLMSVESKKMPIHFQEKEIPVKLYKDVRSPESHITYKMMKSFL.

The tract at residues 1-21 (MENSGKANKKDTHDGPPKEIK) is disordered. Over residues 8–21 (NKKDTHDGPPKEIK) the composition is skewed to basic and acidic residues. Coiled-coil stretches lie at residues 37–184 (EDAV…RKKI) and 216–256 (WEND…LSNC).

The sequence is that of Coiled-coil domain-containing protein 83 (CCDC83) from Homo sapiens (Human).